We begin with the raw amino-acid sequence, 263 residues long: Diphthine synthase (263 aa).

S-adenosyl-L-methionine-binding positions include Leu-11, Asp-89, Ala-92, Ser-117–Val-118, Leu-166, and Leu-208.

It belongs to the diphthine synthase family. In terms of assembly, homodimer.

The catalysed reaction is 2-[(3S)-amino-3-carboxypropyl]-L-histidyl-[translation elongation factor 2] + 3 S-adenosyl-L-methionine = diphthine-[translation elongation factor 2] + 3 S-adenosyl-L-homocysteine + 3 H(+). Its pathway is protein modification; peptidyl-diphthamide biosynthesis. Its function is as follows. S-adenosyl-L-methionine-dependent methyltransferase that catalyzes the trimethylation of the amino group of the modified target histidine residue in translation elongation factor 2 (EF-2), to form an intermediate called diphthine. The three successive methylation reactions represent the second step of diphthamide biosynthesis. In Methanopyrus kandleri (strain AV19 / DSM 6324 / JCM 9639 / NBRC 100938), this protein is Diphthine synthase.